Consider the following 226-residue polypeptide: dTTP/UTP pyrophosphatase (226 aa).

The active-site Proton acceptor is the aspartate 85.

The protein belongs to the Maf family. YhdE subfamily. A divalent metal cation is required as a cofactor.

It localises to the cytoplasm. The enzyme catalyses dTTP + H2O = dTMP + diphosphate + H(+). It carries out the reaction UTP + H2O = UMP + diphosphate + H(+). Nucleoside triphosphate pyrophosphatase that hydrolyzes dTTP and UTP. May have a dual role in cell division arrest and in preventing the incorporation of modified nucleotides into cellular nucleic acids. In Psychrobacter cryohalolentis (strain ATCC BAA-1226 / DSM 17306 / VKM B-2378 / K5), this protein is dTTP/UTP pyrophosphatase.